Consider the following 592-residue polypeptide: Ichor (592 aa).

Positions 114–123 (NNNYMQSAYH) are enriched in polar residues. Disordered regions lie at residues 114 to 156 (NNNY…VSSS), 343 to 377 (LQNR…QAPT), 416 to 439 (LSNP…MQAS), and 459 to 527 (HTTT…DLSG). The segment covering 124 to 148 (PQNQSNPTSTTQSNGGSNSNSNNSN) has biased composition (low complexity). Residues 356–369 (SSGGGGGANQGAGI) show a composition bias toward gly residues. Polar residues predominate over residues 459 to 469 (HTTTASTTGSE). Positions 488-500 (QQQQQQQQQQQQQ) are enriched in low complexity. The span at 507 to 524 (PTTPQMSAISPSGFSASD) shows a compositional bias: polar residues. 2 consecutive C2H2-type zinc fingers follow at residues 536–558 (HRCS…LRTH) and 564–586 (FRCD…QQIH).

Its subcellular location is the nucleus. In terms of biological role, transcriptional activator. In tracheal terminal cells, regulates the transcription of factors involved in the formation of a mature apical extracellular matrix (aECM) which is essential for the integrity and shape of seamless tubes. This chain is Ichor, found in Drosophila melanogaster (Fruit fly).